We begin with the raw amino-acid sequence, 1953 residues long: Protein BNI1 (1953 aa).

Disordered stretches follow at residues 1–152 (MLKN…ASSL), 230–258 (MRAN…ANSS), 263–282 (KSVL…SNSL), and 287–306 (TLSS…SGSL). Residues 31–40 (ANSNATNSNT) show a composition bias toward low complexity. Polar residues-rich tracts occupy residues 41 to 100 (GSPT…SQYM) and 110 to 143 (VSSQ…RQHT). Positions 174–696 (EMPSDPYEVE…NVSVASTSDE (523 aa)) constitute a GBD/FH3 domain. A compositionally biased stretch (low complexity) spans 232 to 246 (ANTTSSSTASRTSMA). Polar residues predominate over residues 263 to 278 (KSVLMTSASSPTSTVY). A phosphoserine mark is found at Ser-311 and Ser-325. The interval 312–337 (LNNIYRGGAENNTSASTLPGDRTNRP) is disordered. 3 coiled-coil regions span residues 712-807 (QTDE…TILN), 864-894 (NKRL…EFEK), and 928-981 (NKLN…YKGF). Disordered regions lie at residues 990-1014 (IMDS…SLDP), 1040-1094 (HEIQ…LDAL), and 1149-1330 (TQKV…MPAS). In terms of domain architecture, FH1 spans 1053 to 1337 (SSSSSDDESE…PASQIKSAVT (285 aa)). Phosphoserine occurs at positions 1085 and 1170. Residues 1184-1211 (DKAEKDMRQHVENGKQGRVVNHEEDKTA) are compositionally biased toward basic and acidic residues. The segment covering 1217 to 1237 (SKLNNTDGAEDLSTQSSVLSS) has biased composition (polar residues). Residues 1238-1250 (QPPPPPPPPPPVP) show a composition bias toward pro residues. Residues 1257-1270 (SLEKEKKSEDDTVK) show a composition bias toward basic and acidic residues. Positions 1278-1292 (PAPPPPPPPPPPPPM) are enriched in pro residues. 2 positions are modified to phosphoserine: Ser-1338 and Ser-1344. In terms of domain architecture, FH2 spans 1348–1766 (FEKYPRPHKK…YIKHKKIVEE (419 aa)). A coiled-coil region spans residues 1732–1811 (KFADFINEYK…DKLLEQLKNA (80 aa)). Over residues 1768–1779 (QKRAQEKEKQKE) the composition is skewed to basic and acidic residues. Disordered regions lie at residues 1768-1797 (QKRA…AEDR), 1809-1844 (KNAG…LLND), and 1872-1899 (PTPL…LEDQ). Residues 1792–1826 (DEAEDRRAVMDKLLEQLKNAGPAKSDPSSARKRAL) enclose the DAD domain. Positions 1821 to 1830 (ARKRALVRKK) are enriched in basic residues. Over residues 1880 to 1896 (VMNTSEDLPSPSKTSAL) the composition is skewed to polar residues. A Phosphothreonine modification is found at Thr-1918.

Belongs to the formin homology family. BNI1 subfamily. As to quaternary structure, homodimer, and possibly also homotetramer. Interacts with PFY1 via the FH1 domain and with actin via the FH2 domain.

It localises to the cell membrane. Its subcellular location is the cell projection. It is found in the ruffle membrane. The protein localises to the cytoplasm. The protein resides in the cytoskeleton. Required for the assembly of F-actin structures, such as actin cables and stress fibers. Nucleates actin filaments. Binds to the barbed end of the actin filament and acts as a leaky capper, slowing both polymerization and depolymerization. Protects the growing actin fiber from tight capping proteins and so increases the time of elongation and the total amount of F-actin. May organize microtubules by mediating spindle positioning and movement in the budding process. Potential target of the RHO family members. The sequence is that of Protein BNI1 (BNI1) from Saccharomyces cerevisiae (strain ATCC 204508 / S288c) (Baker's yeast).